The sequence spans 341 residues: Serine/threonine-protein kinase PDIK1L (341 aa).

The region spanning 8 to 334 is the Protein kinase domain; it reads YDLIREVGRG…LELRLVQIAF (327 aa). ATP-binding positions include 14-22 and K37; that span reads VGRGSYGVV. Residue D164 is the Proton acceptor of the active site.

This sequence belongs to the protein kinase superfamily. Ser/Thr protein kinase family. In terms of tissue distribution, expressed in liver, kidney, pancreas, spleen, thymus and prostate.

The protein resides in the nucleus. It carries out the reaction L-seryl-[protein] + ATP = O-phospho-L-seryl-[protein] + ADP + H(+). The catalysed reaction is L-threonyl-[protein] + ATP = O-phospho-L-threonyl-[protein] + ADP + H(+). The sequence is that of Serine/threonine-protein kinase PDIK1L (PDIK1L) from Homo sapiens (Human).